The following is a 902-amino-acid chain: Protein translocase subunit SecA (902 aa).

Residues Q89, 107–111, and D502 each bind ATP; that span reads GEGKT. Zn(2+) contacts are provided by C884, C886, C895, and H896.

It belongs to the SecA family. In terms of assembly, monomer and homodimer. Part of the essential Sec protein translocation apparatus which comprises SecA, SecYEG and auxiliary proteins SecDF-YajC and YidC. Zn(2+) is required as a cofactor.

It is found in the cell inner membrane. The protein resides in the cytoplasm. The enzyme catalyses ATP + H2O + cellular proteinSide 1 = ADP + phosphate + cellular proteinSide 2.. In terms of biological role, part of the Sec protein translocase complex. Interacts with the SecYEG preprotein conducting channel. Has a central role in coupling the hydrolysis of ATP to the transfer of proteins into and across the cell membrane, serving both as a receptor for the preprotein-SecB complex and as an ATP-driven molecular motor driving the stepwise translocation of polypeptide chains across the membrane. The chain is Protein translocase subunit SecA from Agrobacterium fabrum (strain C58 / ATCC 33970) (Agrobacterium tumefaciens (strain C58)).